A 226-amino-acid chain; its full sequence is PKHD-type hydroxylase Abu_0724 (226 aa).

The Fe2OG dioxygenase domain maps to 78–178 (HIISPFFNKY…RMVSFMWIQS (101 aa)). Fe cation-binding residues include H96, D98, and H159. Residue R169 participates in 2-oxoglutarate binding.

The cofactor is Fe(2+). L-ascorbate serves as cofactor.

This is PKHD-type hydroxylase Abu_0724 from Aliarcobacter butzleri (strain RM4018) (Arcobacter butzleri).